The following is a 232-amino-acid chain: Vesicle transport through interaction with t-SNAREs homolog 1B (232 aa).

An N-acetylalanine modification is found at Ala2. 2 interaction with CLINT1 regions span residues 2 to 23 (ASSAASSEHFEKLHEIFRGLHE) and 69 to 73 (APLSF). Residues 2–208 (ASSAASSEHF…SRKVTTNKLL (207 aa)) lie on the Cytoplasmic side of the membrane. Residues 35–98 (TAGTEEKKKL…AKLHREVRST (64 aa)) are a coiled coil. The residue at position 103 (Thr103) is a Phosphothreonine. Position 107 is an omega-N-methylarginine (Arg107). Position 138 is a phosphoserine (Ser138). Residues 161–198 (SEIIEELGEQRDQLERTKSRLVNTSENLSKSRKILRSM) adopt a coiled-coil conformation. Residues 209 to 229 (LSIIILLELAILGGLVYYKFF) traverse the membrane as a helical; Anchor for type IV membrane protein segment. Residues 230–232 (RSH) lie on the Vesicular side of the membrane.

This sequence belongs to the VTI1 family. As to quaternary structure, forms a SNARE complex with STX7, STX8 and VAMP8 which functions in the homotypic fusion of late endosomes. Component of the SNARE complex composed of STX7, STX8, VAMP7 and VIT1B that is required for heterotypic fusion of late endosomes with lysosomes. May interact with STX17. Interacts with CLINT1. As to expression, expressed in all tissues examined.

The protein localises to the early endosome membrane. It localises to the late endosome membrane. The protein resides in the lysosome membrane. It is found in the cytoplasmic granule. Its subcellular location is the recycling endosome membrane. In terms of biological role, V-SNARE that mediates vesicle transport pathways through interactions with t-SNAREs on the target membrane. These interactions are proposed to mediate aspects of the specificity of vesicle trafficking and to promote fusion of the lipid bilayers. May be concerned with increased secretion of cytokines associated with cellular senescence. In Homo sapiens (Human), this protein is Vesicle transport through interaction with t-SNAREs homolog 1B (VTI1B).